The sequence spans 222 residues: UPF0502 protein XCV4380 (222 aa).

This sequence belongs to the UPF0502 family.

This is UPF0502 protein XCV4380 from Xanthomonas euvesicatoria pv. vesicatoria (strain 85-10) (Xanthomonas campestris pv. vesicatoria).